Here is a 150-residue protein sequence, read N- to C-terminus: MALRQIRLSEDEILRKKSRPVEVVDDKIRQILDDMLDTLQNTENGAAIAAPQVGILKQLVVIATGEDIIKLVNPKIVKKEGEQEVVEGCLSIPNVYGKLKRPKKVTVEALNENGEKITLTGEGFLAKCFCHEIDHLDGILFTDLVTEYIK.

Fe cation-binding residues include C89 and H131. The active site involves E132. H135 contacts Fe cation.

Belongs to the polypeptide deformylase family. Requires Fe(2+) as cofactor.

The catalysed reaction is N-terminal N-formyl-L-methionyl-[peptide] + H2O = N-terminal L-methionyl-[peptide] + formate. Removes the formyl group from the N-terminal Met of newly synthesized proteins. Requires at least a dipeptide for an efficient rate of reaction. N-terminal L-methionine is a prerequisite for activity but the enzyme has broad specificity at other positions. This chain is Peptide deformylase 2, found in Clostridium acetobutylicum (strain ATCC 824 / DSM 792 / JCM 1419 / IAM 19013 / LMG 5710 / NBRC 13948 / NRRL B-527 / VKM B-1787 / 2291 / W).